Consider the following 94-residue polypeptide: uncharacterized protein (94 aa).

Could be a silencing control element for the regulation of the restriction system. This is an uncharacterized protein from Herpetosiphon aurantiacus (Herpetosiphon giganteus).